Consider the following 62-residue polypeptide: ATP synthase subunit K, mitochondrial (62 aa).

The helical transmembrane segment at 14–30 threads the bilayer; the sequence is HHLAIATIGTVVALVAP.

In terms of assembly, F-type ATP synthases have 2 components, the catalytic core F(1) and the membrane-embedded component F(0), linked together by a central stalk and a peripheral stalk. The central stalk, also called rotor shaft, is often seen as part of F(1). The peripheral stalk is seen as part of F(0). F(0) contains the membrane channel next to the rotor. F-type ATP synthases form dimers but each monomer functions independently in ATP generation. The dimer consists of 18 different polypeptides: ATP1 (subunit alpha, part of F(1), 3 molecules per monomer), ATP2 (subunit beta, part of F(1), 3 molecules per monomer), ATP3 (subunit gamma, part of the central stalk), ATP4 (subunit b, part of the peripheral stalk), ATP5/OSCP (subunit 5/OSCP, part of the peripheral stalk), ATP6 (subunit a, part of the peripheral stalk), ATP7 (subunit d, part of the peripheral stalk), ATP8 (subunit 8, part of the peripheral stalk), OLI1 (subunit c, part of the rotor, 10 molecules per monomer), ATP14 (subunit h, part of the peripheral stalk), ATP15 (subunit epsilon, part of the central stalk), ATP16 (subunit delta, part of the central stalk), ATP17 (subunit f, part of the peripheral stalk), ATP18 (subunit i/j, part of the peripheral stalk). Dimer-specific subunits are ATP19 (subunit k, at interface between monomers), ATP20 (subunit g, at interface between monomers), TIM11 (subunit e, at interface between monomers). Also contains subunit L.

It is found in the mitochondrion inner membrane. Mitochondrial membrane ATP synthase (F(1)F(0) ATP synthase or Complex V) produces ATP from ADP in the presence of a proton gradient across the membrane which is generated by electron transport complexes of the respiratory chain. F-type ATP synthases consist of two structural domains, F(1) - containing the extramembraneous catalytic core, and F(0) - containing the membrane proton channel, linked together by a central stalk and a peripheral stalk. During catalysis, ATP synthesis in the catalytic domain of F(1) is coupled via a rotary mechanism of the central stalk subunits to proton translocation. Part of the complex F(0) domain. Minor subunit located with subunit a/ATP6 in the membrane. The K chain binds the dimeric form by interacting with the G and E chains. The sequence is that of ATP synthase subunit K, mitochondrial from Pichia angusta (Yeast).